The primary structure comprises 246 residues: MSVISMKQLLEAGVHFGHQTRRWNPKMAEYIYTERNGIYIIDLQKSVGKVDEAYYAIKDVVANGGKVLFVGTKKQAQDSVKSEAERCGMYYVNERWLGGMLTNFKTIQSRIKRLKEIETMANDGTFEVLPKKEVIELKKEWEKLEKNLGGIKDMKEVPEAIFVVDPKKERICIQEAHNLGVKLIGIADTNCDPEELDHVIPGNDDAIRAVKLIVAKMADAVIEANQGVQLTDSTDVAEEATETVEA.

It belongs to the universal ribosomal protein uS2 family.

This is Small ribosomal subunit protein uS2 from Lachnoclostridium phytofermentans (strain ATCC 700394 / DSM 18823 / ISDg) (Clostridium phytofermentans).